Reading from the N-terminus, the 458-residue chain is MTVARWLRLWERGQAMLHVTWGSKVRLWSLVPALLGTPRALSSLENRMGVYRKMWNPKEPCDWAQQYRERFIPFSKEQLLRLLIQEFHSSPAERAALEAFSAHVDFCTLFHYHQLLARLQALYDPINPDRETLDQPSLTDPERLSSEKDVLQALRPLLAQANFSPLSEDALAYALVVHHPQDEVQVTINLDQYIYIQFWALGQRVGQMPHKSSVGSKRGFFRKLPPVERRYFKRVVLAARTKGGHLVLKSFKDTPLEGLEQLLPELKVRTPVLQRALLNLMLVVSGVMIFVNVGMVILSDLKMATSLLLLLFAAFMGVKASKVFGQRRSAQALELAHVLYYRSTSNNSELLSALALRAQEEHIKEALLAHSFLARRPGGSQGKPEETSRWLQSEVESWLLAQSGCDVTFNGPRALAHLQALTPSLGLFPLPELPQLDPMVLGTPEATQAALGSSYPSP.

2 consecutive transmembrane segments (helical) span residues 277–297 (LLNLMLVVSGVMIFVNVGMVI) and 298–318 (LSDLKMATSLLLLLFAAFMGV). Serine 329 carries the phosphoserine modification.

The protein localises to the membrane. This chain is Transmembrane protein 143 (Tmem143), found in Mus musculus (Mouse).